We begin with the raw amino-acid sequence, 307 residues long: Metapyrocatechase (307 aa).

VOC domains are found at residues 7-122 and 150-269; these read RPGH…LYAD and RFDH…VFCG. The Fe cation site is built by His-153, His-214, and Glu-265.

The protein belongs to the extradiol ring-cleavage dioxygenase family. Homotetramer. It depends on Fe(2+) as a cofactor.

The enzyme catalyses catechol + O2 = (2Z,4E)-2-hydroxy-6-oxohexa-2,4-dienoate + H(+). It functions in the pathway aromatic compound metabolism; benzoate degradation via hydroxylation. The polypeptide is Metapyrocatechase (dmpB) (Pseudomonas sp. (strain CF600)).